The sequence spans 179 residues: Deoxyuridine 5'-triphosphate nucleotidohydrolase, mitochondrial (179 aa).

A mitochondrion-targeting transit peptide spans 1–41 (MPIEQKYFSLFSNLFKRLTTNNNNNNYLKMAPPNFETFKVK). Residues 97–99 (RSG), 111–114 (GVID), G122, R165, and 170–171 (FG) contribute to the dUTP site.

It belongs to the dUTPase family. In terms of assembly, homotrimer. The cofactor is Mg(2+).

Its subcellular location is the mitochondrion. The catalysed reaction is dUTP + H2O = dUMP + diphosphate + H(+). It participates in pyrimidine metabolism; dUMP biosynthesis; dUMP from dCTP (dUTP route): step 2/2. Functionally, this enzyme is involved in nucleotide metabolism: it produces dUMP, the immediate precursor of thymidine nucleotides and it decreases the intracellular concentration of dUTP so that uracil cannot be incorporated into DNA. This chain is Deoxyuridine 5'-triphosphate nucleotidohydrolase, mitochondrial (dut), found in Dictyostelium discoideum (Social amoeba).